Here is a 375-residue protein sequence, read N- to C-terminus: Chaperone protein DnaJ (375 aa).

In terms of domain architecture, J spans 5 to 70 (DYYSLLEVER…QKRAAYDRYG (66 aa)). The segment at 135-213 (GKTVDIEIDV…CHGEGRCEKH (79 aa)) adopts a CR-type zinc-finger fold. Zn(2+) is bound by residues cysteine 148, cysteine 151, cysteine 165, cysteine 168, cysteine 187, cysteine 190, cysteine 201, and cysteine 204. CXXCXGXG motif repeat units lie at residues 148-155 (CDACHGSG), 165-172 (CDTCHGSG), 187-194 (CPVCQGKG), and 201-208 (CPECHGEG).

This sequence belongs to the DnaJ family. Homodimer. The cofactor is Zn(2+).

It is found in the cytoplasm. Its function is as follows. Participates actively in the response to hyperosmotic and heat shock by preventing the aggregation of stress-denatured proteins and by disaggregating proteins, also in an autonomous, DnaK-independent fashion. Unfolded proteins bind initially to DnaJ; upon interaction with the DnaJ-bound protein, DnaK hydrolyzes its bound ATP, resulting in the formation of a stable complex. GrpE releases ADP from DnaK; ATP binding to DnaK triggers the release of the substrate protein, thus completing the reaction cycle. Several rounds of ATP-dependent interactions between DnaJ, DnaK and GrpE are required for fully efficient folding. Also involved, together with DnaK and GrpE, in the DNA replication of plasmids through activation of initiation proteins. This chain is Chaperone protein DnaJ, found in Zymomonas mobilis subsp. mobilis (strain ATCC 31821 / ZM4 / CP4).